The following is a 268-amino-acid chain: MSDAPTASALKTPVRVSGPVFFISDLHLSAGMPATAAAFERFVRTRAREARTLVILGDFFEYWVGDEELADPFHRHVAALLAELAQAGTRVLLMHGNRDFLLGKRFLATTQATLLPDPSVLEADGLRIVLAHGDALCTRDAAYMRFRRWTRKRWVQRLFLAMPLRWRLRIAQKMRADSEAGRALSANVAGEPRAAAMMGDVAPEAVDALFKAAGIPLLIHGHTHRPRLHHEPGGERWVLSDWDFDHAQPRGSFLRLQDGVLTAEPVTA.

Residues D25, H27, D58, N97, and H132 each coordinate Mn(2+). 97–98 serves as a coordination point for substrate; that stretch reads NR. Residues D140, S178, E191, and H222 each coordinate substrate. Mn(2+) contacts are provided by H222 and H224.

The protein belongs to the LpxH family. Mn(2+) serves as cofactor.

It is found in the cell inner membrane. It catalyses the reaction UDP-2-N,3-O-bis[(3R)-3-hydroxytetradecanoyl]-alpha-D-glucosamine + H2O = 2-N,3-O-bis[(3R)-3-hydroxytetradecanoyl]-alpha-D-glucosaminyl 1-phosphate + UMP + 2 H(+). It participates in glycolipid biosynthesis; lipid IV(A) biosynthesis; lipid IV(A) from (3R)-3-hydroxytetradecanoyl-[acyl-carrier-protein] and UDP-N-acetyl-alpha-D-glucosamine: step 4/6. Its function is as follows. Hydrolyzes the pyrophosphate bond of UDP-2,3-diacylglucosamine to yield 2,3-diacylglucosamine 1-phosphate (lipid X) and UMP by catalyzing the attack of water at the alpha-P atom. Involved in the biosynthesis of lipid A, a phosphorylated glycolipid that anchors the lipopolysaccharide to the outer membrane of the cell. In Ralstonia nicotianae (strain ATCC BAA-1114 / GMI1000) (Ralstonia solanacearum), this protein is UDP-2,3-diacylglucosamine hydrolase.